The chain runs to 369 residues: Flagellar P-ring protein (369 aa).

A signal peptide spans 1 to 22 (MIKLKQLIAATLLLSTAFGVHA).

The protein belongs to the FlgI family. The basal body constitutes a major portion of the flagellar organelle and consists of four rings (L,P,S, and M) mounted on a central rod.

It localises to the periplasm. Its subcellular location is the bacterial flagellum basal body. Its function is as follows. Assembles around the rod to form the L-ring and probably protects the motor/basal body from shearing forces during rotation. The sequence is that of Flagellar P-ring protein from Pseudomonas syringae pv. syringae (strain B728a).